We begin with the raw amino-acid sequence, 97 residues long: Large ribosomal subunit protein bL27 (97 aa).

A propeptide spanning residues 1-9 (MFTFDLQLF) is cleaved from the precursor.

It belongs to the bacterial ribosomal protein bL27 family. Post-translationally, the N-terminus is cleaved by ribosomal processing cysteine protease Prp.

The protein is Large ribosomal subunit protein bL27 of Syntrophomonas wolfei subsp. wolfei (strain DSM 2245B / Goettingen).